The primary structure comprises 198 residues: LexA repressor (198 aa).

A DNA-binding region (H-T-H motif) is located at residues 28–47; sequence IRDIAKHFKLTPRGAHIHVL. Active-site for autocatalytic cleavage activity residues include S120 and K157.

It belongs to the peptidase S24 family. As to quaternary structure, homodimer.

The catalysed reaction is Hydrolysis of Ala-|-Gly bond in repressor LexA.. Represses a number of genes involved in the response to DNA damage (SOS response), including recA and lexA. In the presence of single-stranded DNA, RecA interacts with LexA causing an autocatalytic cleavage which disrupts the DNA-binding part of LexA, leading to derepression of the SOS regulon and eventually DNA repair. The polypeptide is LexA repressor (Thermosipho africanus (strain TCF52B)).